We begin with the raw amino-acid sequence, 325 residues long: Flavin-dependent thymidylate synthase (325 aa).

The ThyX domain maps to 12 to 267 (ISVRLLEYTG…PRLFRWAGPS (256 aa)). FAD contacts are provided by residues serine 65, 89–91 (RHR), and glutamine 97. Residues 86 to 89 (QLVR) and 97 to 101 (QLSHR) contribute to the dUMP site. Positions 89–99 (RHRVASYTQLS) match the ThyX motif motif. Residues 110 to 159 (AALKACESIGLDCPSKPAETEGGRKAAYRLYSQALERAARDFGASERFAI) are insert. Arginine 205 is a binding site for dUMP. 221-223 (NAR) lines the FAD pocket. Arginine 233 serves as a coordination point for dUMP. Arginine 233 acts as the Involved in ionization of N3 of dUMP, leading to its activation in catalysis.

This sequence belongs to the thymidylate synthase ThyX family. As to quaternary structure, homotetramer. FAD is required as a cofactor.

It catalyses the reaction dUMP + (6R)-5,10-methylene-5,6,7,8-tetrahydrofolate + NADPH + H(+) = dTMP + (6S)-5,6,7,8-tetrahydrofolate + NADP(+). Its pathway is pyrimidine metabolism; dTTP biosynthesis. Its function is as follows. Catalyzes the reductive methylation of 2'-deoxyuridine-5'-monophosphate (dUMP) to 2'-deoxythymidine-5'-monophosphate (dTMP) while utilizing 5,10-methylenetetrahydrofolate (mTHF) as the methyl donor, and NADPH and FADH(2) as the reductant. This chain is Flavin-dependent thymidylate synthase, found in Aeropyrum pernix (strain ATCC 700893 / DSM 11879 / JCM 9820 / NBRC 100138 / K1).